We begin with the raw amino-acid sequence, 222 residues long: Ribonuclease 3 (222 aa).

Residues 1–19 (MKFFIFILALQQLYVQSFA) form the signal peptide. Glutamine 30 is a binding site for RNA. An intrachain disulfide couples cysteine 36 to cysteine 42. Residues histidine 57, phenylalanine 107, 110–111 (HE), and 114–115 (KH) contribute to the RNA site. Histidine 57 serves as the catalytic Proton donor. Disulfide bonds link cysteine 72–cysteine 118, cysteine 178–cysteine 213, and cysteine 194–cysteine 205. Glutamate 111 is a catalytic residue. Catalysis depends on histidine 115, which acts as the Proton acceptor.

Belongs to the RNase T2 family.

It carries out the reaction a ribonucleotidyl-ribonucleotide-RNA + H2O = a 3'-end 3'-phospho-ribonucleotide-RNA + a 5'-end dephospho-ribonucleoside-RNA + H(+). In terms of biological role, may remobilize phosphate, particularly when cells senesce or when phosphate becomes limiting. The sequence is that of Ribonuclease 3 (RNS3) from Arabidopsis thaliana (Mouse-ear cress).